The following is a 129-amino-acid chain: Small ribosomal subunit protein uS11 (129 aa).

It belongs to the universal ribosomal protein uS11 family. Part of the 30S ribosomal subunit. Interacts with proteins S7 and S18. Binds to IF-3.

Functionally, located on the platform of the 30S subunit, it bridges several disparate RNA helices of the 16S rRNA. Forms part of the Shine-Dalgarno cleft in the 70S ribosome. This Marinobacter nauticus (strain ATCC 700491 / DSM 11845 / VT8) (Marinobacter aquaeolei) protein is Small ribosomal subunit protein uS11.